Reading from the N-terminus, the 231-residue chain is Ribose-5-phosphate isomerase A (231 aa).

Substrate is bound by residues 40-43 (TGST), 93-96 (DGAD), and 106-109 (KGGG). E115 (proton acceptor) is an active-site residue. K133 provides a ligand contact to substrate.

It belongs to the ribose 5-phosphate isomerase family. In terms of assembly, homodimer.

It carries out the reaction aldehydo-D-ribose 5-phosphate = D-ribulose 5-phosphate. It functions in the pathway carbohydrate degradation; pentose phosphate pathway; D-ribose 5-phosphate from D-ribulose 5-phosphate (non-oxidative stage): step 1/1. Functionally, catalyzes the reversible conversion of ribose-5-phosphate to ribulose 5-phosphate. The chain is Ribose-5-phosphate isomerase A from Escherichia coli O1:K1 / APEC.